The chain runs to 190 residues: Imidazoleglycerol-phosphate dehydratase (190 aa).

This sequence belongs to the imidazoleglycerol-phosphate dehydratase family.

The protein localises to the cytoplasm. The catalysed reaction is D-erythro-1-(imidazol-4-yl)glycerol 3-phosphate = 3-(imidazol-4-yl)-2-oxopropyl phosphate + H2O. Its pathway is amino-acid biosynthesis; L-histidine biosynthesis; L-histidine from 5-phospho-alpha-D-ribose 1-diphosphate: step 6/9. This Sulfurimonas denitrificans (strain ATCC 33889 / DSM 1251) (Thiomicrospira denitrificans (strain ATCC 33889 / DSM 1251)) protein is Imidazoleglycerol-phosphate dehydratase.